The chain runs to 357 residues: Fulicin peptides (357 aa).

The first 17 residues, 1–17 (MQPTVLLILMTSCLTYQ), serve as a signal peptide directing secretion. A propeptide spanning residues 18-119 (VIADKPKGNH…VDGSQGHLEP (102 aa)) is cleaved from the precursor. N123 bears the D-asparagine mark. V126 bears the Valine amide mark. A propeptide spanning residues 130–194 (NTLPEEAGSF…YNTMNEDEAS (65 aa)) is cleaved from the precursor. V201 and V209 each carry valine amide. 2 positions are modified to leucine amide: L217 and L226. Residues I233 and I242 each carry the isoleucine amide modification. V250 and V259 each carry valine amide. Positions 263–298 (NQGVFTVSPSSTKISFDDNYLPYLSSVDAGDLSDVN) are excised as a propeptide. At L305 the chain carries Leucine amide. Positions 311-357 (TAEQDETSQRSNERLVALLQNTGFRKRLSRMLQNQRLVEHYPEFIGK) are excised as a propeptide.

Found in central ganglia and the ventricles and atria of the heart.

Its function is as follows. Potentiates tetanic contraction of the penis retractor muscle at very low concentrations, and also shows modulatory actions on the activity of the buccal and ventricular muscles and the central ganglionic neurons. The sequence is that of Fulicin peptides from Lissachatina fulica (Giant African land snail).